Here is a 61-residue protein sequence, read N- to C-terminus: Large ribosomal subunit protein uL30 (61 aa).

This sequence belongs to the universal ribosomal protein uL30 family. In terms of assembly, part of the 50S ribosomal subunit.

This Corynebacterium aurimucosum (strain ATCC 700975 / DSM 44827 / CIP 107346 / CN-1) (Corynebacterium nigricans) protein is Large ribosomal subunit protein uL30.